Here is a 315-residue protein sequence, read N- to C-terminus: Acetyl-coenzyme A carboxylase carboxyl transferase subunit alpha (315 aa).

In terms of domain architecture, CoA carboxyltransferase C-terminal spans 40–293; that stretch reads LQDKSKTLTE…RAELSSQLAM (254 aa).

It belongs to the AccA family. Acetyl-CoA carboxylase is a heterohexamer composed of biotin carboxyl carrier protein (AccB), biotin carboxylase (AccC) and two subunits each of ACCase subunit alpha (AccA) and ACCase subunit beta (AccD).

The protein localises to the cytoplasm. It carries out the reaction N(6)-carboxybiotinyl-L-lysyl-[protein] + acetyl-CoA = N(6)-biotinyl-L-lysyl-[protein] + malonyl-CoA. The protein operates within lipid metabolism; malonyl-CoA biosynthesis; malonyl-CoA from acetyl-CoA: step 1/1. Component of the acetyl coenzyme A carboxylase (ACC) complex. First, biotin carboxylase catalyzes the carboxylation of biotin on its carrier protein (BCCP) and then the CO(2) group is transferred by the carboxyltransferase to acetyl-CoA to form malonyl-CoA. This is Acetyl-coenzyme A carboxylase carboxyl transferase subunit alpha from Pseudomonas fluorescens (strain Pf0-1).